A 497-amino-acid chain; its full sequence is MSPETIGPAAVIVLAAGAGTRMKSRTPKILHEIGGRSMVGHALLAARAINPLKLALVVRHERDRVAEHVTASDPEALIVDQDDVPGTGRAVEVALKALDAEAELTGTVVVTYGDVPLLTGELLGELVATHEAEGNAVTVLTAVLDDATGYGRILRAENGTVTGIREHKDASEAERTIREVNSGIYAFDAAVLRTALEKVTTDNAQGEMYLTDVLGLARDAGGRVAAVVTEDRWQVEGANDRIQLSALAAEHNRRIIESWMRAGVTVVDPATTWIDSTVTLDEDVRLLPNTQLHGSTTVARDAVVGPDTTLTDVNVGEGAKVIRTHGSGSTIGAKASVGPFTYLRPGTVLGETGKIGAFYETKNVTIGRGSKLSHLGYAGDAEIGEDTNIGCGNITANYDGEKKHRTVIGSGVRTGSNTVFVAPVTVGDGAYSGAGAVIRKDVPAGALALSLAAQRNAEGWVAANRPGTASAKLAEAAQELASTSSQFQATIEEGKQA.

Residues 1–241 (MSPETIGPAA…RWQVEGANDR (241 aa)) form a pyrophosphorylase region. UDP-N-acetyl-alpha-D-glucosamine is bound by residues 14–17 (LAAG), K28, Q81, 86–87 (GT), 112–114 (YGD), G151, E166, N181, and N239. Position 114 (D114) interacts with Mg(2+). A Mg(2+)-binding site is contributed by N239. The interval 242-262 (IQLSALAAEHNRRIIESWMRA) is linker. Residues 263–497 (GVTVVDPATT…QATIEEGKQA (235 aa)) are N-acetyltransferase. UDP-N-acetyl-alpha-D-glucosamine-binding residues include R344 and K362. H374 acts as the Proton acceptor in catalysis. Positions 377 and 388 each coordinate UDP-N-acetyl-alpha-D-glucosamine. Acetyl-CoA is bound by residues 397-398 (NY), S416, and A434.

The protein in the N-terminal section; belongs to the N-acetylglucosamine-1-phosphate uridyltransferase family. This sequence in the C-terminal section; belongs to the transferase hexapeptide repeat family. Homotrimer. Mg(2+) serves as cofactor.

It is found in the cytoplasm. It carries out the reaction alpha-D-glucosamine 1-phosphate + acetyl-CoA = N-acetyl-alpha-D-glucosamine 1-phosphate + CoA + H(+). It catalyses the reaction N-acetyl-alpha-D-glucosamine 1-phosphate + UTP + H(+) = UDP-N-acetyl-alpha-D-glucosamine + diphosphate. It participates in nucleotide-sugar biosynthesis; UDP-N-acetyl-alpha-D-glucosamine biosynthesis; N-acetyl-alpha-D-glucosamine 1-phosphate from alpha-D-glucosamine 6-phosphate (route II): step 2/2. It functions in the pathway nucleotide-sugar biosynthesis; UDP-N-acetyl-alpha-D-glucosamine biosynthesis; UDP-N-acetyl-alpha-D-glucosamine from N-acetyl-alpha-D-glucosamine 1-phosphate: step 1/1. Its pathway is bacterial outer membrane biogenesis; LPS lipid A biosynthesis. Its function is as follows. Catalyzes the last two sequential reactions in the de novo biosynthetic pathway for UDP-N-acetylglucosamine (UDP-GlcNAc). The C-terminal domain catalyzes the transfer of acetyl group from acetyl coenzyme A to glucosamine-1-phosphate (GlcN-1-P) to produce N-acetylglucosamine-1-phosphate (GlcNAc-1-P), which is converted into UDP-GlcNAc by the transfer of uridine 5-monophosphate (from uridine 5-triphosphate), a reaction catalyzed by the N-terminal domain. The protein is Bifunctional protein GlmU of Paenarthrobacter aurescens (strain TC1).